The chain runs to 295 residues: Geranylfarnesyl diphosphate synthase (295 aa).

3 residues coordinate isopentenyl diphosphate: Lys51, Arg54, and His83. Mg(2+) is bound by residues Asp90 and Asp94. Residue Arg99 participates in an all-trans-polyprenyl diphosphate binding. Arg100 lines the isopentenyl diphosphate pocket. The an all-trans-polyprenyl diphosphate site is built by Lys174, Thr175, and Gln212.

Belongs to the FPP/GGPP synthase family. In terms of assembly, homodimer. Mg(2+) serves as cofactor.

It carries out the reaction isopentenyl diphosphate + (2E,6E,10E)-geranylgeranyl diphosphate = (2E,6E,10E,14E)-geranylfarnesyl diphosphate + diphosphate. Involved in biosynthesis of the polyprenyl side-chain of methanophenazine, an electron carrier utilized for methanogenesis. Catalyzes the condensation of isopentenyl pyrophosphate with the allylic pyrophosphates to yield geranylfarnesyl diphosphate (GFPP). It prefers geranylgeranyl diphosphate (GGPP) and farnesyl diphosphate (FPP) as allylic substrate. This chain is Geranylfarnesyl diphosphate synthase, found in Methanosarcina mazei (strain ATCC BAA-159 / DSM 3647 / Goe1 / Go1 / JCM 11833 / OCM 88) (Methanosarcina frisia).